The sequence spans 250 residues: Silencing boundary-establishment protein FUB1 (250 aa).

Residues proline 179–isoleucine 250 form a disordered region. A compositionally biased stretch (basic and acidic residues) spans proline 202–methionine 213. Residues proline 229–isoleucine 250 show a composition bias toward gly residues.

It belongs to the proteasome inhibitor PI31 family. Interacts with the 20S proteasome.

Its function is as follows. Plays a role in the establishment of transcriptional silencing boundaries, preventing the propagation of heterochromatic silencing. The polypeptide is Silencing boundary-establishment protein FUB1 (Saccharomyces cerevisiae (strain ATCC 204508 / S288c) (Baker's yeast)).